The sequence spans 415 residues: Membrane-bound ghrelin O-acyltransferase mboat4 (415 aa).

Residues 1-6 (MIDLLW) are Lumenal-facing. The chain crosses the membrane as a helical span at residues 7–28 (ISSDGHPQLFYQFINIPFAFLF). Residues 29 to 42 (HCLSSQGHLSIINR) are Cytoplasmic-facing. A helical membrane pass occupies residues 43 to 58 (YVYLAMGGFMLAIATM). Over 59–61 (GPY) the chain is Lumenal. The helical transmembrane segment at 62–78 (SSLLFLSAIKLLLLIHY) threads the bilayer. At 79–84 (IHPMHL) the chain is on the cytoplasmic side. The helical transmembrane segment at 85 to 103 (HRWILGLQMCWQTCWHLYV) threads the bilayer. The Lumenal portion of the chain corresponds to 104-122 (QYQIYWLQEAPDSRLLLAI). Residues 123-138 (SALMLMTQRISSLSLD) form a helical membrane-spanning segment. The Cytoplasmic segment spans residues 139-193 (FQEGTISNQSILIPFLTYSLYFPALLGGPLCSFNAFVQSVERQHTSMTSYLGNLT). Residues 194–214 (SKISQVIVLVWIKQLFSELLK) traverse the membrane as a helical segment. The Lumenal segment spans residues 215–227 (SATFNIDSVCLDV). The helical transmembrane segment at 228-247 (LWIWIFSLTLRLNYYAHWKM) threads the bilayer. Residues 248-312 (SECVNNAAGL…RKIVFNRTSR (65 aa)) are Cytoplasmic-facing. Catalysis depends on residues asparagine 295 and histidine 326. The helical transmembrane segment at 313 to 326 (SPLFMTFGFSALWH) threads the bilayer. Residues 327–328 (GL) lie on the Lumenal side of the membrane. The helical transmembrane segment at 329 to 345 (HPGQILGFLIWAVTVQA) threads the bilayer. At 346–364 (DYKLHRFSHPKLNSLWRKR) the chain is on the cytoplasmic side. Residues 365–385 (LYVCVNWAFTQLTVACVVVCV) traverse the membrane as a helical segment. Topologically, residues 386 to 394 (ELQSLASVK) are lumenal. A helical membrane pass occupies residues 395-415 (LLWSSCIAVFPLLSALILIIL).

The protein belongs to the membrane-bound acyltransferase family. In terms of assembly, monomer. In terms of processing, not glycosylated.

The protein localises to the endoplasmic reticulum membrane. It catalyses the reaction octanoyl-CoA + L-seryl-[protein] = O-octanoyl-L-seryl-[protein] + CoA. The enzyme catalyses decanoyl-CoA + L-seryl-[protein] = O-decanoyl-L-seryl-[protein] + CoA. It carries out the reaction L-seryl-[protein] + acetyl-CoA = O-acetyl-L-seryl-[protein] + CoA. The catalysed reaction is L-seryl-[protein] + butanoyl-CoA = O-butanoyl-L-seryl-[protein] + CoA. It catalyses the reaction pentanoyl-CoA + L-seryl-[protein] = O-pentanoyl-L-seryl-[protein] + CoA. The enzyme catalyses hexanoyl-CoA + L-seryl-[protein] = O-hexanoyl-L-seryl-[protein] + CoA. It carries out the reaction heptanoyl-CoA + L-seryl-[protein] = O-heptanoyl-L-seryl-[protein] + CoA. The catalysed reaction is nonanoyl-CoA + L-seryl-[protein] = O-nonanoyl-L-seryl-[protein] + CoA. It catalyses the reaction L-seryl-[protein] + dodecanoyl-CoA = O-dodecanoyl-L-seryl-[protein] + CoA. The enzyme catalyses L-seryl-[protein] + tetradecanoyl-CoA = O-tetradecanoyl-L-seryl-[protein] + CoA. It carries out the reaction a fatty acyl-CoA + L-seryl-[protein] = O-fatty acyl-L-seryl-[protein] + CoA. Functionally, catalyzes ghrelin acylation at 'Ser-3' using preferentially octanoyl-CoA, hexanoyl-CoA and decanoyl-CoA as acyl-CoA donors leading to ghrelin activity. In vitro uses also acyl-CoA donors of different lengths from short-chain (C2) to long-chain fatty acids (C16) knowing that acyl-CoA donors from butanoyl-CoA (C4) to dodecanoyl-CoA (C12) are more efficient compared to longer acyl-CoA donors, such as myristoyl-CoA (C14) and palmitoyl-CoA (C16) that are not efficient. In Danio rerio (Zebrafish), this protein is Membrane-bound ghrelin O-acyltransferase mboat4.